The following is a 387-amino-acid chain: Patatin-11 (387 aa).

Positions 1–23 (MATTKSVLVLIFMILATTSSTFA) are cleaved as a signal peptide. The region spanning 32-230 (LSTDGGGIKG…TVGDPALLSL (199 aa)) is the PNPLA domain. A GXGXXG motif is present at residues 36–41 (GGGIKG). The GXSXG motif lies at 75-79 (GTSTG). Catalysis depends on Ser77, which acts as the Nucleophile. Asn115 is a glycosylation site (N-linked (GlcNAc...) asparagine). The active-site Proton acceptor is Asp216. Positions 216-218 (DGG) match the DGA/G motif. Positions 322–385 (ENALNGTTTE…DRKKLRANKA (64 aa)) form a coiled coil. N-linked (GlcNAc...) asparagine glycosylation occurs at Asn326.

It belongs to the patatin family. As to expression, tuber.

The protein localises to the vacuole. Functionally, probable lipolytic acyl hydrolase (LAH), an activity which is thought to be involved in the response of tubers to pathogens. This is Patatin-11 from Solanum tuberosum (Potato).